We begin with the raw amino-acid sequence, 404 residues long: Protein IQ-DOMAIN 12 (404 aa).

The interval 8-25 is calmodulin-binding; that stretch reads FGWMKRLFICEAKARAEK. Positions 11–18 match the Nuclear localization signal 1 motif; the sequence is MKRLFICE. IQ domains are found at residues 108 to 135 and 136 to 158; these read NVAA…ALVR and LQAI…SSHS. Positions 226–233 match the Nuclear localization signal 2 motif; the sequence is IKRDRMLK.

It belongs to the IQD family. As to quaternary structure, binds to multiple calmodulin (CaM) in the presence of Ca(2+) and CaM-like proteins.

The protein localises to the nucleus. The protein resides in the cell membrane. May be involved in cooperative interactions with calmodulins or calmodulin-like proteins. Recruits calmodulin proteins to microtubules, thus being a potential scaffold in cellular signaling and trafficking. May associate with nucleic acids and regulate gene expression at the transcriptional or post-transcriptional level. The polypeptide is Protein IQ-DOMAIN 12 (Arabidopsis thaliana (Mouse-ear cress)).